Consider the following 51-residue polypeptide: Large ribosomal subunit protein bL33 (51 aa).

The tract at residues 1–24 is disordered; it reads MREKIRLNSSAGTGHFYTTDKNKR.

It belongs to the bacterial ribosomal protein bL33 family.

In Cellvibrio japonicus (strain Ueda107) (Pseudomonas fluorescens subsp. cellulosa), this protein is Large ribosomal subunit protein bL33.